Reading from the N-terminus, the 836-residue chain is DNA gyrase subunit A (836 aa).

Residues 46–510 (LPDARDGLKP…ISEEIDDESL (465 aa)) form the Topo IIA-type catalytic domain. Tyrosine 134 acts as the O-(5'-phospho-DNA)-tyrosine intermediate in catalysis. The GyrA-box signature appears at 537 to 543 (QHRGGVG).

This sequence belongs to the type II topoisomerase GyrA/ParC subunit family. In terms of assembly, heterotetramer, composed of two GyrA and two GyrB chains. In the heterotetramer, GyrA contains the active site tyrosine that forms a transient covalent intermediate with DNA, while GyrB binds cofactors and catalyzes ATP hydrolysis.

It localises to the cytoplasm. The catalysed reaction is ATP-dependent breakage, passage and rejoining of double-stranded DNA.. A type II topoisomerase that negatively supercoils closed circular double-stranded (ds) DNA in an ATP-dependent manner to modulate DNA topology and maintain chromosomes in an underwound state. Negative supercoiling favors strand separation, and DNA replication, transcription, recombination and repair, all of which involve strand separation. Also able to catalyze the interconversion of other topological isomers of dsDNA rings, including catenanes and knotted rings. Type II topoisomerases break and join 2 DNA strands simultaneously in an ATP-dependent manner. The polypeptide is DNA gyrase subunit A (Mycoplasma genitalium (strain ATCC 33530 / DSM 19775 / NCTC 10195 / G37) (Mycoplasmoides genitalium)).